The sequence spans 90 residues: MSFVPVNPRPFLQDLVNSFVTIRLKWGETEYVGRLVSIDSYMNIQLSDTKEYINRKFTGALGQVLIRCNNVLYIKKADEAETSGDVKMEE.

Residues 7–80 form the Sm domain; it reads NPRPFLQDLV…VLYIKKADEA (74 aa).

This sequence belongs to the snRNP Sm proteins family. SmF/LSm6 subfamily.

Its subcellular location is the nucleus. The protein localises to the cytoplasm. Its function is as follows. Plays a role in pre-mRNA splicing as a core component of the spliceosomal U1, U2, U4 and U5 small nuclear ribonucleoproteins (snRNPs), the building blocks of the spliceosome. The sequence is that of Probable small nuclear ribonucleoprotein F from Neurospora crassa (strain ATCC 24698 / 74-OR23-1A / CBS 708.71 / DSM 1257 / FGSC 987).